A 416-amino-acid chain; its full sequence is PRKCA-binding protein (416 aa).

The 84-residue stretch at 22-105 folds into the PDZ domain; that stretch reads KVTLQKDAQN…EVTIHYNKLQ (84 aa). Cysteine 44 and cysteine 46 together coordinate Zn(2+). Threonine 82 carries the post-translational modification Phosphothreonine. The 214-residue stretch at 144 to 357 folds into the AH domain; it reads LCNDGLVKRL…CYAVLRDADV (214 aa). The segment at 373 to 416 is disordered; that stretch reads PNQGGFTDGEDEEEEEEDGAAREVSKDARGATGPTDKGGSWCDS. A compositionally biased stretch (acidic residues) spans 380–390; it reads DGEDEEEEEED. The segment covering 391 to 401 has biased composition (basic and acidic residues); sequence GAAREVSKDAR. Cysteine 414 is lipidated: S-palmitoyl cysteine; by DHHC8.

Monomer and homodimer. Interacts with CXADR. Interacts presynaptically with the glutamate receptors GRIA2, GRIA3, GRIK3, isoform 3 of GRIA4, isoform A of GRM4, GRM7 and GRM8; with NAPA and NAPB; and with BTG2. The interaction with NAPA and NAPB disrupts the interaction with GRIA2, conducting to the internalization of GRIA2. Interacts with PRKCA; with the amine transporters SLC6A2 and SLC6A3; with the channels ASIC1 and ASIC2; with the GTP-binding proteins ARF1 and ARF3; with the ephrin receptor tyrosine kinases EPHA7, EPHB1 and EPHB2; with ERBB2 and through its PDZ domain with the C-terminal tail of PRLHR. Interacts with UNC5A. Interacts (via AH domain) with NCS1/FREQ; in a calcium-dependent manner. Interacts with F-actin and associates with the ARP2/3 complex. Interacts (via PDZ domain) with ARF1 (activated); the interaction blocks Arp2/3 complex inhibition. Interacts with SORCS3. Phosphorylation at Thr-82 appears to inhibit the interaction with AMPA receptors. Post-translationally, palmitoylation on Cys-414 is essential for long-term synaptic depression (LTD). Ubiquitous.

It is found in the cytoplasm. The protein resides in the perinuclear region. Its subcellular location is the membrane. The protein localises to the postsynaptic density. It localises to the synapse. It is found in the synaptosome. The protein resides in the cytoskeleton. Functionally, probable adapter protein that bind to and organize the subcellular localization of a variety of membrane proteins containing some PDZ recognition sequence. Involved in the clustering of various receptors, possibly by acting at the receptor internalization level. Plays a role in synaptic plasticity by regulating the trafficking and internalization of AMPA receptors. May be regulated upon PRKCA activation. May regulate ASIC1/ASIC3 channel. Regulates actin polymerization by inhibiting the actin-nucleating activity of the Arp2/3 complex; the function is competitive with nucleation promoting factors and is linked to neuronal morphology regulation and AMPA receptor (AMPAR) endocytosis. Via interaction with the Arp2/3 complex involved in regulation of synaptic plasicity of excitatory synapses and required for spine shrinkage during long-term depression (LTD). Involved in regulation of astrocyte morphology, antagonistic to Arp2/3 complex activator WASL/N-WASP function. This chain is PRKCA-binding protein (Pick1), found in Rattus norvegicus (Rat).